Here is a 517-residue protein sequence, read N- to C-terminus: B3 domain-containing protein REM1 (517 aa).

Positions 7–92 form a DNA-binding region, TF-B3 1; the sequence is FSLFQQKFRT…VFHVAVVSPS (86 aa). A compositionally biased stretch (acidic residues) spans 115 to 140; it reads DDVDDDDYGQDDEDDDDDDDEGEDNI. Residues 115-158 form a disordered region; the sequence is DDVDDDDYGQDDEDDDDDDDEGEDNIENISEKTDKRQEADSSSD. The segment covering 143 to 157 has biased composition (basic and acidic residues); it reads ISEKTDKRQEADSSS. 2 DNA-binding regions (TF-B3) span residues 162–259 and 285–385; these read FITA…CPQE and FLIV…FCSK. The interval 393–415 is disordered; sequence GKGNQRTRKKRACETAPQPRNVK.

Expressed in the shoot apical meristem (SAM), in the inflorescence apex and flowers.

It is found in the nucleus. Functionally, may play a role in flower development. The polypeptide is B3 domain-containing protein REM1 (REM1) (Arabidopsis thaliana (Mouse-ear cress)).